Here is a 492-residue protein sequence, read N- to C-terminus: Tyrosine--tRNA ligase, mitochondrial (492 aa).

Residue Y89 participates in L-tyrosine binding. D93 serves as a coordination point for ATP. The short motif at 94 to 103 (PTAQSLHLGN) is the 'HIGH' region element. D133, Y239, Q243, D246, and Q265 together coordinate L-tyrosine. The 'KMSKS' region motif lies at 303–307 (KFGKS). K306 contacts ATP.

Belongs to the class-I aminoacyl-tRNA synthetase family. In terms of assembly, homodimer.

Its subcellular location is the mitochondrion matrix. The catalysed reaction is tRNA(Tyr) + L-tyrosine + ATP = L-tyrosyl-tRNA(Tyr) + AMP + diphosphate + H(+). Its function is as follows. Catalyzes the attachment of tyrosine to tRNA(Tyr) in a two-step reaction: tyrosine is first activated by ATP to form Tyr-AMP and then transferred to the acceptor end of tRNA(Tyr). This chain is Tyrosine--tRNA ligase, mitochondrial (MSY1), found in Saccharomyces cerevisiae (strain ATCC 204508 / S288c) (Baker's yeast).